The primary structure comprises 266 residues: METTVSAKNSLENENFLKEKSETVFLDEAAITKPPASKKKRKNRKKKKNNGPSEQFVGNNDLEEQRSGSIDSKDKEKPLDEKVKELENANKTLSDLVRRIQIQRDEAEQKAEIYNRDALNTKQEHLDIKKRLEKSDETVCKLKEENENLQDMLRNVGNELVESRDEIKELIEKQKVQKESVKSHESELSSVMSSEILPKASSDSAGSFEPPVISNISKELINKEYARNVLLQFLENHEHRDKILPILSTALDLEEVHQHLILKNLN.

Polar residues predominate over residues 1 to 13 (METTVSAKNSLEN). A disordered region spans residues 1–88 (METTVSAKNS…LDEKVKELEN (88 aa)). Residue Ser10 is modified to Phosphoserine. The segment covering 36 to 49 (ASKKKRKNRKKKKN) has biased composition (basic residues). Residues 63 to 88 (EEQRSGSIDSKDKEKPLDEKVKELEN) are compositionally biased toward basic and acidic residues. A coiled-coil region spans residues 73–188 (KDKEKPLDEK…ESVKSHESEL (116 aa)). Phosphoserine occurs at positions 202 and 204. The GRIP domain maps to 216–264 (ISKELINKEYARNVLLQFLENHEHRDKILPILSTALDLEEVHQHLILKN).

The protein localises to the cytoplasm. This Schizosaccharomyces pombe (strain 972 / ATCC 24843) (Fission yeast) protein is GRIP and coiled-coil domain-containing protein C365.11.